A 166-amino-acid polypeptide reads, in one-letter code: MFPMVPEFMNYGQQTVRAARYIGQGFMITLSHANRLPVTIQYPYEKLITSERFRGRIHFEFDKCIACEVCVRVCPIDLPVVDWKLETDIRKKRLLNYSIDFGICIFCGNCVEYCPTNCLSMTEEYELSTYDRHELNYNQIALGRLPMSIIDDYTIRTILNLPEIKT.

2 consecutive 4Fe-4S ferredoxin-type domains span residues 55 to 84 (GRIH…VDWK) and 95 to 124 (LNYS…MTEE). Cys-64, Cys-67, Cys-70, Cys-74, Cys-104, Cys-107, Cys-110, and Cys-114 together coordinate [4Fe-4S] cluster.

This sequence belongs to the complex I 23 kDa subunit family. In terms of assembly, NDH is composed of at least 16 different subunits, 5 of which are encoded in the nucleus. It depends on [4Fe-4S] cluster as a cofactor.

The protein localises to the plastid. It is found in the chloroplast thylakoid membrane. It carries out the reaction a plastoquinone + NADH + (n+1) H(+)(in) = a plastoquinol + NAD(+) + n H(+)(out). The catalysed reaction is a plastoquinone + NADPH + (n+1) H(+)(in) = a plastoquinol + NADP(+) + n H(+)(out). NDH shuttles electrons from NAD(P)H:plastoquinone, via FMN and iron-sulfur (Fe-S) centers, to quinones in the photosynthetic chain and possibly in a chloroplast respiratory chain. The immediate electron acceptor for the enzyme in this species is believed to be plastoquinone. Couples the redox reaction to proton translocation, and thus conserves the redox energy in a proton gradient. This is NAD(P)H-quinone oxidoreductase subunit I, chloroplastic from Oblivia mikanioides (Salmea mikanioides).